Here is a 622-residue protein sequence, read N- to C-terminus: Phosphoenolpyruvate carboxykinase [GTP] (622 aa).

Residues R86 and 220 to 222 (YGG) each bind substrate. Mn(2+)-binding residues include K229 and H248. Substrate is bound at residue S270. 271 to 276 (MCGKTS) provides a ligand contact to GTP. Residue C272 is part of the active site. Residue D289 participates in Mn(2+) binding. The span at 360 to 374 (ENHSGKWWRGKKDSE) shows a compositional bias: basic and acidic residues. Positions 360 to 381 (ENHSGKWWRGKKDSEGNEISPS) are disordered. Position 384–386 (384–386 (NAR)) interacts with substrate. 2 residues coordinate GTP: R386 and R418.

This sequence belongs to the phosphoenolpyruvate carboxykinase [GTP] family. It depends on Mn(2+) as a cofactor.

It is found in the cytoplasm. The enzyme catalyses oxaloacetate + GTP = phosphoenolpyruvate + GDP + CO2. The protein operates within carbohydrate biosynthesis; gluconeogenesis. Catalyzes the conversion of oxaloacetate (OAA) to phosphoenolpyruvate (PEP), the rate-limiting step in the metabolic pathway that produces glucose from lactate and other precursors derived from the citric acid cycle. The chain is Phosphoenolpyruvate carboxykinase [GTP] from Thermococcus sibiricus (strain DSM 12597 / MM 739).